Here is a 240-residue protein sequence, read N- to C-terminus: Ubiquinone biosynthesis O-methyltransferase (240 aa).

S-adenosyl-L-methionine contacts are provided by arginine 44, glycine 64, aspartate 85, and methionine 129.

This sequence belongs to the methyltransferase superfamily. UbiG/COQ3 family.

The catalysed reaction is a 3-demethylubiquinol + S-adenosyl-L-methionine = a ubiquinol + S-adenosyl-L-homocysteine + H(+). It carries out the reaction a 3-(all-trans-polyprenyl)benzene-1,2-diol + S-adenosyl-L-methionine = a 2-methoxy-6-(all-trans-polyprenyl)phenol + S-adenosyl-L-homocysteine + H(+). It participates in cofactor biosynthesis; ubiquinone biosynthesis. Its function is as follows. O-methyltransferase that catalyzes the 2 O-methylation steps in the ubiquinone biosynthetic pathway. The chain is Ubiquinone biosynthesis O-methyltransferase from Escherichia coli O8 (strain IAI1).